A 730-amino-acid polypeptide reads, in one-letter code: Semaphorin-1A (730 aa).

The N-terminal stretch at 1-20 is a signal peptide; that stretch reads MRAALVAVAALLWVALHAAA. Topologically, residues 21–630 are extracellular; sequence WVNDVSPKMY…LPIYTAETLT (610 aa). Residues 28–490 form the Sema domain; it reads KMYVQFGEER…SDDEILAIKL (463 aa). 2 N-linked (GlcNAc...) asparagine glycosylation sites follow: Asn44 and Asn71. Intrachain disulfides connect Cys97-Cys107 and Cys125-Cys134. N-linked (GlcNAc...) asparagine glycosylation is found at Asn163 and Asn267. Cystine bridges form between Cys244-Cys358 and Cys268-Cys317. A glycan (N-linked (GlcNAc...) asparagine) is linked at Asn360. Cystine bridges form between Cys493–Cys512 and Cys504–Cys521. Residue Asn539 is glycosylated (N-linked (GlcNAc...) asparagine). Residues 631 to 651 traverse the membrane as a helical segment; that stretch reads IAIVTSCLGALVVGFISGFLF. The Cytoplasmic portion of the chain corresponds to 652-730; sequence SRRCRGEDYT…PIQKVKKTYI (79 aa). The segment covering 708–720 has biased composition (low complexity); that stretch reads ANGKNANSSAENK. Residues 708-730 form a disordered region; that stretch reads ANGKNANSSAENKPIQKVKKTYI.

This sequence belongs to the semaphorin family. In terms of tissue distribution, dynamically expressed on a subset of axon pathways in the developing CNS and on circumferential bands of epithelial cells in developing limb buds.

Its subcellular location is the membrane. Functionally, plays a role in growth cones guidance. The protein is Semaphorin-1A (SEMA-1A) of Schistocerca americana (American grasshopper).